Reading from the N-terminus, the 105-residue chain is Thioredoxin-like protein slr0233 (105 aa).

The region spanning 1-102 (MAVKKQFANF…QAAQLIQQLQ (102 aa)) is the Thioredoxin domain. A disulfide bridge connects residues C30 and C33.

Belongs to the thioredoxin family.

This Synechocystis sp. (strain ATCC 27184 / PCC 6803 / Kazusa) protein is Thioredoxin-like protein slr0233.